The sequence spans 100 residues: MHLYTYLYLLVPLVTFHLILGTGTLDDGGALTERRSADATALKAEPVLLQKSAARSTDDNGKDRLTQMKRILKQRGNKARGEEELQENQELIREKSNGKR.

The first 21 residues, 1 to 21 (MHLYTYLYLLVPLVTFHLILG), serve as a signal peptide directing secretion. Residues 22-80 (TGTLDDGGALTERRSADATALKAEPVLLQKSAARSTDDNGKDRLTQMKRILKQRGNKAR) constitute a propeptide that is removed on maturation. The disordered stretch occupies residues 52–100 (SAARSTDDNGKDRLTQMKRILKQRGNKARGEEELQENQELIREKSNGKR). Basic and acidic residues predominate over residues 56–66 (STDDNGKDRLT). The interval 61 to 80 (GKDRLTQMKRILKQRGNKAR) is gamma-carboxylation recognition sequence that plays a role in the conversion of Glu to carboxy-Glu (Gla). An a divalent metal cation-binding site is contributed by Glu83. 5 positions are modified to 4-carboxyglutamate: Glu83, Glu84, Glu87, Glu90, and Glu94. Glu87, Glu90, and Glu94 together coordinate a divalent metal cation. The segment covering 90–100 (ELIREKSNGKR) has biased composition (basic and acidic residues). Position 97 is an asparagine amide (Asn97).

Belongs to the conotoxin B superfamily. Ca(2+) serves as cofactor. Mg(2+) is required as a cofactor. In terms of tissue distribution, expressed by the venom duct.

The protein resides in the secreted. Functionally, conantokins inhibit N-methyl-D-aspartate (NMDA) receptors. This toxin is selective for the NR2B/GRIN2B subunit. Induces sleep-like symptoms in young mice and hyperactivity in older mice. This chain is Conantokin-G, found in Conus geographus (Geography cone).